The sequence spans 124 residues: S-adenosylmethionine decarboxylase proenzyme (124 aa).

Ser-63 (schiff-base intermediate with substrate; via pyruvic acid) is an active-site residue. Residue Ser-63 is modified to Pyruvic acid (Ser); by autocatalysis. Residue His-68 is the Proton acceptor; for processing activity of the active site. Residue Cys-83 is the Proton donor; for catalytic activity of the active site.

It belongs to the prokaryotic AdoMetDC family. Type 1 subfamily. Heterotetramer of two alpha and two beta chains arranged as a dimer of alpha/beta heterodimers. The cofactor is pyruvate. Post-translationally, is synthesized initially as an inactive proenzyme. Formation of the active enzyme involves a self-maturation process in which the active site pyruvoyl group is generated from an internal serine residue via an autocatalytic post-translational modification. Two non-identical subunits are generated from the proenzyme in this reaction, and the pyruvate is formed at the N-terminus of the alpha chain, which is derived from the carboxyl end of the proenzyme. The post-translation cleavage follows an unusual pathway, termed non-hydrolytic serinolysis, in which the side chain hydroxyl group of the serine supplies its oxygen atom to form the C-terminus of the beta chain, while the remainder of the serine residue undergoes an oxidative deamination to produce ammonia and the pyruvoyl group blocking the N-terminus of the alpha chain.

It carries out the reaction S-adenosyl-L-methionine + H(+) = S-adenosyl 3-(methylsulfanyl)propylamine + CO2. The protein operates within amine and polyamine biosynthesis; S-adenosylmethioninamine biosynthesis; S-adenosylmethioninamine from S-adenosyl-L-methionine: step 1/1. Its function is as follows. Catalyzes the decarboxylation of S-adenosylmethionine to S-adenosylmethioninamine (dcAdoMet), the propylamine donor required for the synthesis of the polyamines spermine and spermidine from the diamine putrescine. The protein is S-adenosylmethionine decarboxylase proenzyme of Geobacillus kaustophilus (strain HTA426).